Consider the following 1349-residue polypeptide: ABC multidrug transporter G (1349 aa).

Positions 51 to 299 (RQFLGFLKGS…FEDMGFVCPK (249 aa)) constitute an ABC transporter 1 domain. Asparagine 144 is a glycosylation site (N-linked (GlcNAc...) asparagine). The next 4 helical transmembrane spans lie at 407–427 (LSLI…GSLF), 436–456 (SIFL…LESM), 492–512 (IPVV…MAAL), and 523–543 (WIIV…VGAL). Asparagine 549 carries an N-linked (GlcNAc...) asparagine glycan. A run of 2 helical transmembrane segments spans residues 550–570 (ASKI…YLIP) and 580–600 (WIFY…NEFV). Residue asparagine 649 is glycosylated (N-linked (GlcNAc...) asparagine). A helical membrane pass occupies residues 659-679 (FGVIIGFWVFFIVLTALGLEL). The 243-residue stretch at 721 to 963 (FTWHDLDYHV…VLDYFARHGA (243 aa)) folds into the ABC transporter 2 domain. 757 to 764 (GCSGAGKT) contributes to the ATP binding site. Asparagine 994 carries N-linked (GlcNAc...) asparagine glycosylation. 6 helical membrane passes run 1056–1076 (VILH…IGDG), 1085–1105 (FAIF…QPFF), 1121–1143 (IYHW…ILCA), 1166–1186 (MYLQ…GIAA), 1193–1213 (FAAV…CGVV), and 1226–1246 (WLYY…EVLW). A glycan (N-linked (GlcNAc...) asparagine) is linked at asparagine 1287. A helical transmembrane segment spans residues 1318 to 1338 (TGITALFCVSSYAMVFLMMKL).

This sequence belongs to the ABC transporter superfamily. ABCG family. PDR (TC 3.A.1.205) subfamily.

The protein localises to the cell membrane. Its function is as follows. ABC efflux transporter that seems not to be able to transport azoles, nor rhodamine 6G (R-6G), a known substrate for many ABC transporters. This chain is ABC multidrug transporter G, found in Aspergillus fumigatus (strain ATCC MYA-4609 / CBS 101355 / FGSC A1100 / Af293) (Neosartorya fumigata).